Reading from the N-terminus, the 610-residue chain is Autophagy-related protein 22-1 (610 aa).

The disordered stretch occupies residues 1-29 (MIFTSTPPAPPPADAQQRQPRYPGEDTTP). A helical membrane pass occupies residues 41–61 (YGIAAEVFAVCGVGSFLPLTL). N-linked (GlcNAc...) asparagine glycosylation occurs at Asn90. A run of 3 helical transmembrane segments spans residues 120–140 (SFAM…LISF), 153–173 (LLLT…FISP), and 177–197 (ILGA…FVVL). A disordered region spans residues 216-242 (KTEGEELPHLDSSGEYTRSGSFNRGDN). Residues 229–239 (GEYTRSGSFNR) show a composition bias toward polar residues. 4 helical membrane passes run 277-297 (GVGL…LLLF), 310-330 (TLPL…FTVV), 379-399 (VVIF…VSGT), and 415-435 (VGLL…LWPV). Asn445 is a glycosylation site (N-linked (GlcNAc...) asparagine). A run of 4 helical transmembrane segments spans residues 450 to 470 (LCIA…IPLV), 485 to 507 (FPLG…SFFG), 527 to 547 (KGSS…TGQV), and 550 to 570 (GFFF…MVNA). Positions 586 to 610 (KSHGENSSEFGHPSEEAEGLLARNP) are disordered. The N-linked (GlcNAc...) asparagine glycan is linked to Asn591.

Belongs to the ATG22 family.

The protein resides in the vacuole membrane. In terms of biological role, vacuolar effluxer which mediate the efflux of amino acids resulting from autophagic degradation. The release of autophagic amino acids allows the maintenance of protein synthesis and viability during nitrogen starvation. This chain is Autophagy-related protein 22-1 (atg22-1), found in Aspergillus clavatus (strain ATCC 1007 / CBS 513.65 / DSM 816 / NCTC 3887 / NRRL 1 / QM 1276 / 107).